A 94-amino-acid polypeptide reads, in one-letter code: Acylphosphatase (94 aa).

The Acylphosphatase-like domain maps to 7–94 (AVRVRISGRV…NMPRDFRITG (88 aa)). Catalysis depends on residues R22 and N40.

Belongs to the acylphosphatase family.

The catalysed reaction is an acyl phosphate + H2O = a carboxylate + phosphate + H(+). The sequence is that of Acylphosphatase (acyP) from Rhizobium etli (strain ATCC 51251 / DSM 11541 / JCM 21823 / NBRC 15573 / CFN 42).